Reading from the N-terminus, the 412-residue chain is Peptide chain release factor subunit 1 (412 aa).

It belongs to the eukaryotic release factor 1 family. Heterodimer of two subunits, one of which binds GTP.

Its subcellular location is the cytoplasm. Its function is as follows. Directs the termination of nascent peptide synthesis (translation) in response to the termination codons UAA, UAG and UGA. The chain is Peptide chain release factor subunit 1 from Methanobrevibacter smithii (strain ATCC 35061 / DSM 861 / OCM 144 / PS).